The sequence spans 337 residues: Adenylosuccinate synthetase (337 aa).

GTP-binding positions include 12-18 (GDEGKGK) and 42-44 (GHT). The Proton acceptor role is filled by Asp-13. Mg(2+) contacts are provided by Asp-13 and Gly-42. Residues 13 to 16 (DEGK), 40 to 43 (NAGH), Thr-124, Arg-138, Gln-176, Thr-191, and Arg-253 each bind IMP. The active-site Proton donor is His-43. Substrate is bound at residue 249–255 (TVTGRRR). GTP-binding positions include Arg-255, 281–283 (GVD), and 321–323 (STG).

This sequence belongs to the adenylosuccinate synthetase family. Homodimer. The cofactor is Mg(2+).

The protein resides in the cytoplasm. The catalysed reaction is IMP + L-aspartate + GTP = N(6)-(1,2-dicarboxyethyl)-AMP + GDP + phosphate + 2 H(+). It functions in the pathway purine metabolism; AMP biosynthesis via de novo pathway; AMP from IMP: step 1/2. Plays an important role in the de novo pathway of purine nucleotide biosynthesis. Catalyzes the first committed step in the biosynthesis of AMP from IMP. This is Adenylosuccinate synthetase from Archaeoglobus fulgidus (strain ATCC 49558 / DSM 4304 / JCM 9628 / NBRC 100126 / VC-16).